The following is a 455-amino-acid chain: L-serine dehydratase 2 (455 aa).

It belongs to the iron-sulfur dependent L-serine dehydratase family. It depends on [4Fe-4S] cluster as a cofactor. Activated by post-translational modification by a system involving at least three gene products. Activation is mimicked in vitro by iron and dithiothreitol. There is considerable evidence for a free-radical activation mechanism.

The enzyme catalyses L-serine = pyruvate + NH4(+). The protein operates within carbohydrate biosynthesis; gluconeogenesis. Functionally, also deaminates threonine, particularly when it is present in high concentration. This chain is L-serine dehydratase 2 (sdaB), found in Escherichia coli (strain K12).